Consider the following 20-residue polypeptide: Ferric reductase A (20 aa).

As to quaternary structure, monomer.

It catalyses the reaction 2 a Fe(II)-siderophore + NAD(+) + H(+) = 2 a Fe(III)-siderophore + NADH. Reductase activity that acts on Fe(3+)-chelates and NADH as an electron donor and requires the presence of FMN for full activity. May play a role in iron uptake. This is Ferric reductase A (ferA) from Paracoccus denitrificans.